A 714-amino-acid polypeptide reads, in one-letter code: Angiogenic factor with G patch and FHA domains 1 (714 aa).

Over residues 1-18 the composition is skewed to pro residues; sequence MASEAPSPPRSPPPPTSP. Disordered regions lie at residues 1–22, 259–307, and 322–384; these read MASEAPSPPRSPPPPTSPEPEL, QPYP…HTSC, and IGIH…SYDE. The residue at position 2 (Ala-2) is an N-acetylalanine. Phosphoserine occurs at positions 7 and 11. A coiled-coil region spans residues 18–88; the sequence is PEPELAQLRR…QRGRNEDNKK (71 aa). Basic and acidic residues predominate over residues 279 to 298; it reads KDPDSSATNEEKDLNSEDQK. Polar residues predominate over residues 335–355; the sequence is VPTSGNTIESPLHENISNSTS. Residue Ser-344 is modified to Phosphoserine. The span at 364 to 383 shows a compositional bias: acidic residues; it reads TDSEPEEGEITDSQTEDSYD. One can recognise an FHA domain in the interval 434-487; it reads ATIGREKDMEHTLRIPEVGVSKFHAEIYFDHDLQSYVLVDQGSQNGTIVNGKQI. The segment covering 586-609 has biased composition (basic and acidic residues); the sequence is KYKDRAGKRREQVGSEGTFQRDDA. Disordered stretches follow at residues 586-617 and 655-714; these read KYKDRAGKRREQVGSEGTFQRDDAPASVHSEI and RTHA…GTLE. Residues 619 to 665 form the G-patch domain; it reads DSNKGRKMLEKMGWKKGEGLGKDGGGMKTPIQLQLRRTHAGLGTGKP. Position 664 is an N6-acetyllysine (Lys-664). Residues 680-690 show a composition bias toward basic and acidic residues; sequence KNWDKARERFT.

As to quaternary structure, interacts with the secreted angiogenic factor TNFSF12. Widely expressed. Expressed in endothelial cells, vascular smooth muscle cells and osteoblasts. Expressed in umbilical vein endothelial cells and microvascular endothelial cells.

The protein localises to the cytoplasm. It localises to the secreted. Functionally, promotes angiogenesis and the proliferation of endothelial cells. Able to bind to endothelial cells and promote cell proliferation, suggesting that it may act in an autocrine fashion. The polypeptide is Angiogenic factor with G patch and FHA domains 1 (AGGF1) (Homo sapiens (Human)).